The sequence spans 279 residues: Large ribosomal subunit protein uL2 (279 aa).

The disordered stretch occupies residues 223–279 (TVRGSAMNPNDHPHGGGEGRSPVGMDAPRTPWGKRHMGVKTRNNKKSSTSMIVRRRK). Basic residues predominate over residues 254-267 (WGKRHMGVKTRNNK).

Belongs to the universal ribosomal protein uL2 family. In terms of assembly, part of the 50S ribosomal subunit. Forms a bridge to the 30S subunit in the 70S ribosome.

Its function is as follows. One of the primary rRNA binding proteins. Required for association of the 30S and 50S subunits to form the 70S ribosome, for tRNA binding and peptide bond formation. It has been suggested to have peptidyltransferase activity; this is somewhat controversial. Makes several contacts with the 16S rRNA in the 70S ribosome. The protein is Large ribosomal subunit protein uL2 of Ureaplasma urealyticum serovar 10 (strain ATCC 33699 / Western).